Consider the following 101-residue polypeptide: Urease subunit beta (101 aa).

The protein belongs to the urease beta subunit family. As to quaternary structure, heterotrimer of UreA (gamma), UreB (beta) and UreC (alpha) subunits. Three heterotrimers associate to form the active enzyme.

Its subcellular location is the cytoplasm. The enzyme catalyses urea + 2 H2O + H(+) = hydrogencarbonate + 2 NH4(+). It functions in the pathway nitrogen metabolism; urea degradation; CO(2) and NH(3) from urea (urease route): step 1/1. This chain is Urease subunit beta, found in Rhodopseudomonas palustris (strain HaA2).